We begin with the raw amino-acid sequence, 201 residues long: Large ribosomal subunit protein bL25 (201 aa).

The protein belongs to the bacterial ribosomal protein bL25 family. CTC subfamily. Part of the 50S ribosomal subunit; part of the 5S rRNA/L5/L18/L25 subcomplex. Contacts the 5S rRNA. Binds to the 5S rRNA independently of L5 and L18.

Functionally, this is one of the proteins that binds to the 5S RNA in the ribosome where it forms part of the central protuberance. In Aromatoleum aromaticum (strain DSM 19018 / LMG 30748 / EbN1) (Azoarcus sp. (strain EbN1)), this protein is Large ribosomal subunit protein bL25.